The primary structure comprises 190 residues: Peptide deformylase (190 aa).

Positions 106 and 148 each coordinate Fe cation. Residue glutamate 149 is part of the active site. Histidine 152 provides a ligand contact to Fe cation.

It belongs to the polypeptide deformylase family. Fe(2+) serves as cofactor.

It carries out the reaction N-terminal N-formyl-L-methionyl-[peptide] + H2O = N-terminal L-methionyl-[peptide] + formate. In terms of biological role, removes the formyl group from the N-terminal Met of newly synthesized proteins. Requires at least a dipeptide for an efficient rate of reaction. N-terminal L-methionine is a prerequisite for activity but the enzyme has broad specificity at other positions. The sequence is that of Peptide deformylase from Methylacidiphilum infernorum (isolate V4) (Methylokorus infernorum (strain V4)).